A 416-amino-acid polypeptide reads, in one-letter code: CBL-interacting serine/threonine-protein kinase 21 (416 aa).

Positions 12 to 264 constitute a Protein kinase domain; that stretch reads YEIGRTIGEG…AEIIIKDSWF (253 aa). ATP is bound by residues 18-26 and Lys-41; that span reads IGEGNFAKV. Residue Asp-134 is the Proton acceptor of the active site. The interval 152-178 is activation loop; that stretch reads DFGLSAVPKSGDMLSTACGSPCYIAPE. Phosphoserine is present on Ser-156. At Thr-167 the chain carries Phosphothreonine. In terms of domain architecture, NAF spans 291 to 315; it reads ASSNFINAFQIIAMSSDLDLSGLFE. The interval 321–351 is PPI; that stretch reads RYKTRIGSKNTAQETIKKIEAAATYVSLSVE.

The protein belongs to the protein kinase superfamily. CAMK Ser/Thr protein kinase family. SNF1 subfamily. As to quaternary structure, interacts with CBL9. Mn(2+) serves as cofactor.

It carries out the reaction L-seryl-[protein] + ATP = O-phospho-L-seryl-[protein] + ADP + H(+). The catalysed reaction is L-threonyl-[protein] + ATP = O-phospho-L-threonyl-[protein] + ADP + H(+). In terms of biological role, CIPK serine-threonine protein kinases interact with CBL proteins. Binding of a CBL protein to the regulatory NAF domain of CIPK protein lead to the activation of the kinase in a calcium-dependent manner. The polypeptide is CBL-interacting serine/threonine-protein kinase 21 (CIPK21) (Arabidopsis thaliana (Mouse-ear cress)).